Reading from the N-terminus, the 639-residue chain is Immunoglobulin-like domain-containing receptor 2 (639 aa).

Positions 1–20 (MDRVLLRWISLFWLTAMVEG) are cleaved as a signal peptide. Residues 21 to 162 (LQVTVPDKKK…LEGKNEDSVE (142 aa)) enclose the Ig-like V-type domain. The Lumenal portion of the chain corresponds to 21-186 (LQVTVPDKKK…PSFAVEIMPE (166 aa)). A disulfide bridge links cysteine 42 with cysteine 145. The chain crosses the membrane as a helical span at residues 187–207 (WVFVGLVLLGVFLFFVLVGIC). Residues 208–639 (WCQCCPHSCC…DFPTRMSLVV (432 aa)) are Cytoplasmic-facing. 3 disordered regions span residues 273-295 (LMDK…HSVR), 374-415 (WSGV…MLSR), and 437-639 (YGQR…SLVV). 2 stretches are compositionally biased toward basic and acidic residues: residues 393–414 (YNKE…EMLS) and 442–464 (RRAD…ESRA). Residue serine 473 is modified to Phosphoserine. The span at 483–493 (RSREPLTDADR) shows a compositional bias: basic and acidic residues. Arginine 544 is subject to Omega-N-methylarginine. Position 579 is a phosphoserine (serine 579). The span at 606–617 (RGRDLPYHSNSE) shows a compositional bias: basic and acidic residues.

Belongs to the immunoglobulin superfamily. LISCH7 family. In terms of assembly, interacts with MARVELD2 and OCLN. Interacts with P4HB AND HSPA5; the interaction with HSPA5 stabilizes ILDR2 expression. Interacts (via C-terminus) with TRA2A, TRA2B and SRSF1. In terms of tissue distribution, expressed in testis, brain, pituitary, colon, heart, nerves, prostate, esophagus, lung liver and small intestine. Highly expressed in macrophages, also expressed in monocytes and at low levels in NK and NKT cells (at protein level).

The protein localises to the endoplasmic reticulum membrane. The protein resides in the cell junction. It localises to the tight junction. Its subcellular location is the nucleus. May be involved in ER stress pathways with effects on lipid homeostasis and insulin secretion. With ILDR1 and LSR, involved in the maintain of the epithelial barrier function through the recruitment of MARVELD2/tricellulin to tricellular tight junctions. Also functions as a B7-like protein family member expressed on immune cells and inflamed tissue and with T-cell inhibitory activity. In the inner ear, may regulate alternative pre-mRNA splicing via binding to TRA2A, TRA2B and SRSF1. This chain is Immunoglobulin-like domain-containing receptor 2, found in Homo sapiens (Human).